Here is a 367-residue protein sequence, read N- to C-terminus: Peptide chain release factor 2 (367 aa).

At Q254 the chain carries N5-methylglutamine.

Belongs to the prokaryotic/mitochondrial release factor family. Methylated by PrmC. Methylation increases the termination efficiency of RF2.

Its subcellular location is the cytoplasm. In terms of biological role, peptide chain release factor 2 directs the termination of translation in response to the peptide chain termination codons UGA and UAA. This Neisseria meningitidis serogroup C / serotype 2a (strain ATCC 700532 / DSM 15464 / FAM18) protein is Peptide chain release factor 2.